The following is a 311-amino-acid chain: 4-diphosphocytidyl-2-C-methyl-D-erythritol kinase (311 aa).

The active site involves Lys-13. 114–124 (PVAGGMAGGSA) serves as a coordination point for ATP. The active site involves Asp-156.

It belongs to the GHMP kinase family. IspE subfamily.

The catalysed reaction is 4-CDP-2-C-methyl-D-erythritol + ATP = 4-CDP-2-C-methyl-D-erythritol 2-phosphate + ADP + H(+). The protein operates within isoprenoid biosynthesis; isopentenyl diphosphate biosynthesis via DXP pathway; isopentenyl diphosphate from 1-deoxy-D-xylulose 5-phosphate: step 3/6. Catalyzes the phosphorylation of the position 2 hydroxy group of 4-diphosphocytidyl-2C-methyl-D-erythritol. The polypeptide is 4-diphosphocytidyl-2-C-methyl-D-erythritol kinase (Corynebacterium diphtheriae (strain ATCC 700971 / NCTC 13129 / Biotype gravis)).